Consider the following 364-residue polypeptide: Ferrochelatase (364 aa).

Positions 210 and 291 each coordinate Fe cation.

This sequence belongs to the ferrochelatase family.

The protein resides in the cytoplasm. It carries out the reaction heme b + 2 H(+) = protoporphyrin IX + Fe(2+). It participates in porphyrin-containing compound metabolism; protoheme biosynthesis; protoheme from protoporphyrin-IX: step 1/1. Its function is as follows. Catalyzes the ferrous insertion into protoporphyrin IX. The polypeptide is Ferrochelatase (Idiomarina loihiensis (strain ATCC BAA-735 / DSM 15497 / L2-TR)).